A 211-amino-acid chain; its full sequence is Calcipressin-like protein (211 aa).

A phosphoserine mark is found at Ser113 and Ser117. Thr182 bears the Phosphothreonine mark.

The protein belongs to the RCAN family.

Functionally, inhibits calcineurin-dependent transcriptional responses by binding to the catalytic domain of calcineurin. This is Calcipressin-like protein (RCN1) from Saccharomyces cerevisiae (strain ATCC 204508 / S288c) (Baker's yeast).